Reading from the N-terminus, the 140-residue chain is Holo-[acyl-carrier-protein] synthase (140 aa).

Mg(2+) contacts are provided by D8 and E57.

The protein belongs to the P-Pant transferase superfamily. AcpS family. Mg(2+) is required as a cofactor.

Its subcellular location is the cytoplasm. The catalysed reaction is apo-[ACP] + CoA = holo-[ACP] + adenosine 3',5'-bisphosphate + H(+). Its function is as follows. Transfers the 4'-phosphopantetheine moiety from coenzyme A to a Ser of acyl-carrier-protein. The chain is Holo-[acyl-carrier-protein] synthase from Beijerinckia indica subsp. indica (strain ATCC 9039 / DSM 1715 / NCIMB 8712).